A 212-amino-acid chain; its full sequence is Outer-membrane lipoprotein LolB (212 aa).

The signal sequence occupies residues 1 to 16 (MACRSWVLGILLVLVG). A lipid anchor (N-palmitoyl cysteine) is attached at Cys-17. A lipid anchor (S-diacylglycerol cysteine) is attached at Cys-17.

The protein belongs to the LolB family. Monomer.

It localises to the cell outer membrane. Functionally, plays a critical role in the incorporation of lipoproteins in the outer membrane after they are released by the LolA protein. This is Outer-membrane lipoprotein LolB from Nitrosomonas europaea (strain ATCC 19718 / CIP 103999 / KCTC 2705 / NBRC 14298).